We begin with the raw amino-acid sequence, 276 residues long: UPF0328 protein ECU04_0100 (276 aa).

Residues 1–24 form a disordered region; sequence MGIIDVQRSHLTATPSKERDAPAH.

Belongs to the UPF0328 family.

This is UPF0328 protein ECU04_0100 from Encephalitozoon cuniculi (strain GB-M1) (Microsporidian parasite).